Reading from the N-terminus, the 194-residue chain is Probable molybdenum cofactor guanylyltransferase (194 aa).

Residues 8–10 (LAG), Lys-20, and Asp-99 each bind GTP. Asp-99 is a binding site for Mg(2+).

It belongs to the MobA family. It depends on Mg(2+) as a cofactor.

It localises to the cytoplasm. The enzyme catalyses Mo-molybdopterin + GTP + H(+) = Mo-molybdopterin guanine dinucleotide + diphosphate. Functionally, transfers a GMP moiety from GTP to Mo-molybdopterin (Mo-MPT) cofactor (Moco or molybdenum cofactor) to form Mo-molybdopterin guanine dinucleotide (Mo-MGD) cofactor. This Synechococcus elongatus (strain ATCC 33912 / PCC 7942 / FACHB-805) (Anacystis nidulans R2) protein is Probable molybdenum cofactor guanylyltransferase.